The sequence spans 298 residues: MFKSGFVAILGRPNVGKSTFLNHVMGQKIAIMSDKAQTTRNKIMGIYTTETEQIVFIDTPGIHKPKTALGDFMVESAYSTLREVETVLFMVPADEKRGKGDDMIIERLKAAKIPVILVINKIDKVHPDQLLEQIDDFRSQMDFKEVVPISALEGNNVPTLIKLLTDNLEEGFQYFPEDQITDHPERFLVSEMIREKVLHFTQQEVPHSVAVVVESMKRDEETDKVHIRATIMVERDSQKGIIIGKQGAMLKKIGKMARRDIELMLGDKVYLETWVKVKKNWRDKKLDLADFGYNEKEY.

Positions 3–170 (KSGFVAILGR…IKLLTDNLEE (168 aa)) constitute an Era-type G domain. A G1 region spans residues 11–18 (GRPNVGKS). 11-18 (GRPNVGKS) lines the GTP pocket. The G2 stretch occupies residues 37–41 (QTTRN). The interval 58 to 61 (DTPG) is G3. GTP is bound by residues 58–62 (DTPGI) and 120–123 (NKID). A G4 region spans residues 120–123 (NKID). The G5 stretch occupies residues 149–151 (ISA). Residues 201–279 (TQQEVPHSVA…YLETWVKVKK (79 aa)) enclose the KH type-2 domain.

It belongs to the TRAFAC class TrmE-Era-EngA-EngB-Septin-like GTPase superfamily. Era GTPase family. As to quaternary structure, monomer.

Its subcellular location is the cytoplasm. It localises to the cell membrane. Its function is as follows. An essential GTPase that binds both GDP and GTP, with rapid nucleotide exchange. Plays a role in 16S rRNA processing and 30S ribosomal subunit biogenesis and possibly also in cell cycle regulation and energy metabolism. The chain is GTPase Era from Streptococcus pyogenes serotype M2 (strain MGAS10270).